A 376-amino-acid chain; its full sequence is Queuine tRNA-ribosyltransferase (376 aa).

The active-site Proton acceptor is D92. Substrate is bound by residues 92–96, D146, Q190, and G217; that span reads DSGGF. Positions 248 to 254 are RNA binding; it reads GVGRPED. The active-site Nucleophile is D267. Positions 272-276 are RNA binding; important for wobble base 34 recognition; sequence TRNAR. The Zn(2+) site is built by C305, C307, C310, and H337.

The protein belongs to the queuine tRNA-ribosyltransferase family. As to quaternary structure, homodimer. Within each dimer, one monomer is responsible for RNA recognition and catalysis, while the other monomer binds to the replacement base PreQ1. Zn(2+) serves as cofactor.

The enzyme catalyses 7-aminomethyl-7-carbaguanine + guanosine(34) in tRNA = 7-aminomethyl-7-carbaguanosine(34) in tRNA + guanine. It participates in tRNA modification; tRNA-queuosine biosynthesis. Functionally, catalyzes the base-exchange of a guanine (G) residue with the queuine precursor 7-aminomethyl-7-deazaguanine (PreQ1) at position 34 (anticodon wobble position) in tRNAs with GU(N) anticodons (tRNA-Asp, -Asn, -His and -Tyr). Catalysis occurs through a double-displacement mechanism. The nucleophile active site attacks the C1' of nucleotide 34 to detach the guanine base from the RNA, forming a covalent enzyme-RNA intermediate. The proton acceptor active site deprotonates the incoming PreQ1, allowing a nucleophilic attack on the C1' of the ribose to form the product. After dissociation, two additional enzymatic reactions on the tRNA convert PreQ1 to queuine (Q), resulting in the hypermodified nucleoside queuosine (7-(((4,5-cis-dihydroxy-2-cyclopenten-1-yl)amino)methyl)-7-deazaguanosine). This is Queuine tRNA-ribosyltransferase from Stenotrophomonas maltophilia (strain K279a).